Consider the following 843-residue polypeptide: Excretory canal abnormal protein 6 (843 aa).

Disordered stretches follow at residues 54–135 (QLKD…EKKT), 568–601 (TLES…PAKT), 748–767 (TPLS…MTAE), and 773–843 (TMKP…PKWV). Pro residues-rich tracts occupy residues 66–76 (TPPPPPPPPPL) and 83–103 (APPP…PPPI). Residues 127–512 (FLPKKEKKTK…KEEKKETQTT (386 aa)) form the FH2 domain. Composition is skewed to polar residues over residues 776–792 (PSVS…TSSH) and 819–830 (IPQSPTVTSSAR).

This sequence belongs to the formin homology family. As to expression, expressed in the excretory cell and mostly accumulates at the tip of the excretory cell canals.

It is found in the cytoplasm. It localises to the cytoskeleton. Functionally, constitutively active protein required for microtubule and F-actin growth, structural maintenance and organization during excretory cell tubulogenesis. The protein is Excretory canal abnormal protein 6 of Caenorhabditis elegans.